A 268-amino-acid polypeptide reads, in one-letter code: Tryptophan synthase alpha chain (268 aa).

Residues Glu-49 and Asp-60 each act as proton acceptor in the active site.

It belongs to the TrpA family. In terms of assembly, tetramer of two alpha and two beta chains.

The catalysed reaction is (1S,2R)-1-C-(indol-3-yl)glycerol 3-phosphate + L-serine = D-glyceraldehyde 3-phosphate + L-tryptophan + H2O. Its pathway is amino-acid biosynthesis; L-tryptophan biosynthesis; L-tryptophan from chorismate: step 5/5. Functionally, the alpha subunit is responsible for the aldol cleavage of indoleglycerol phosphate to indole and glyceraldehyde 3-phosphate. This Escherichia coli O17:K52:H18 (strain UMN026 / ExPEC) protein is Tryptophan synthase alpha chain.